A 194-amino-acid chain; its full sequence is Imidazoleglycerol-phosphate dehydratase (194 aa).

It belongs to the imidazoleglycerol-phosphate dehydratase family.

It is found in the cytoplasm. The catalysed reaction is D-erythro-1-(imidazol-4-yl)glycerol 3-phosphate = 3-(imidazol-4-yl)-2-oxopropyl phosphate + H2O. Its pathway is amino-acid biosynthesis; L-histidine biosynthesis; L-histidine from 5-phospho-alpha-D-ribose 1-diphosphate: step 6/9. The protein is Imidazoleglycerol-phosphate dehydratase of Rubrobacter xylanophilus (strain DSM 9941 / JCM 11954 / NBRC 16129 / PRD-1).